The primary structure comprises 275 residues: 2,3,4,5-tetrahydropyridine-2,6-dicarboxylate N-succinyltransferase (275 aa).

Substrate contacts are provided by arginine 106 and aspartate 143.

The protein belongs to the transferase hexapeptide repeat family. In terms of assembly, homotrimer.

Its subcellular location is the cytoplasm. It catalyses the reaction (S)-2,3,4,5-tetrahydrodipicolinate + succinyl-CoA + H2O = (S)-2-succinylamino-6-oxoheptanedioate + CoA. It functions in the pathway amino-acid biosynthesis; L-lysine biosynthesis via DAP pathway; LL-2,6-diaminopimelate from (S)-tetrahydrodipicolinate (succinylase route): step 1/3. In Cupriavidus necator (strain ATCC 17699 / DSM 428 / KCTC 22496 / NCIMB 10442 / H16 / Stanier 337) (Ralstonia eutropha), this protein is 2,3,4,5-tetrahydropyridine-2,6-dicarboxylate N-succinyltransferase.